Here is a 56-residue protein sequence, read N- to C-terminus: MVSKEKINRINELARIAKERVLTKLEEEEQQILRKEYIEAFRKSFRKQLDNIELVD.

It belongs to the UPF0291 family.

The protein resides in the cytoplasm. The chain is UPF0291 protein Clos_1191 from Alkaliphilus oremlandii (strain OhILAs) (Clostridium oremlandii (strain OhILAs)).